A 185-amino-acid polypeptide reads, in one-letter code: Prenylated Rab acceptor protein 1 (185 aa).

Over 1-78 the chain is Cytoplasmic; that stretch reads MAAQKDQQKD…RNVEYYQSNY (78 aa). A required for interaction with prenylated RAB3A and VAMP2 region spans residues 30 to 54; that stretch reads AGREWLERRRATIRPWGTFVDQQRF. The next 2 helical transmembrane spans lie at 79–94 and 95–112; these read VFVFLGLILYCVVTSP and MLLVALAVFFGACYILYL. The Cytoplasmic segment spans residues 113–131; the sequence is RTLQSKLVLFGREVSPAHQ. The next 2 helical transmembrane spans lie at 132 to 148 and 149 to 165; these read YALAGGVSFPFFWLAGA and GSAVFWVLGATLVLIGS. The required for interaction with GDI1 stretch occupies residues 165-185; it reads SHAAFHQIEPADGEELQMEPV. Residues 166 to 185 lie on the Cytoplasmic side of the membrane; that stretch reads HAAFHQIEPADGEELQMEPV. A required for interaction with prenylated RAB3A and VAMP2 region spans residues 175–185; sequence ADGEELQMEPV. Positions 175 to 185 are homodimerization; it reads ADGEELQMEPV.

Belongs to the PRA1 family. In terms of assembly, homodimers. Interacts specifically with both prenylated Rab proteins (including RAB3A and RAB1), and VAMP2 (synaptobrevin-2), in an exclusive way. Interacts with NDRG1. Interacts with free GDI1 in the absence of Rab proteins. Also interacts with PCLO. Ubiquitous.

The protein resides in the cell membrane. It localises to the cytoplasm. The protein localises to the golgi apparatus. It is found in the cytoplasmic vesicle. Its subcellular location is the secretory vesicle. The protein resides in the synaptic vesicle. Functionally, general Rab protein regulator required for vesicle formation from the Golgi complex. May control vesicle docking and fusion by mediating the action of Rab GTPases to the SNARE complexes. In addition it inhibits the removal of Rab GTPases from the membrane by GDI1. This Rattus norvegicus (Rat) protein is Prenylated Rab acceptor protein 1 (Rabac1).